Reading from the N-terminus, the 837-residue chain is Periplasmic nitrate reductase (837 aa).

Residues 1 to 32 (MTSPKLDRRQMLKLEAAAIAAAAAGLPVPALA) constitute a signal peptide (tat-type signal). The 4Fe-4S Mo/W bis-MGD-type domain maps to 44–100 (LKWDKAACRFCGTGCSVMVATKENRVVATHGDIKAEVNRGLNCVKGYFLSKIMYGHD). Residues cysteine 51, cysteine 54, cysteine 58, and cysteine 86 each coordinate [4Fe-4S] cluster. Mo-bis(molybdopterin guanine dinucleotide)-binding positions include lysine 88, glutamine 155, asparagine 180, cysteine 184, 217 to 224 (WGSNMAEM), 248 to 252 (STFEH), 267 to 269 (QTD), methionine 378, glutamine 382, asparagine 488, 514 to 515 (SD), lysine 537, aspartate 564, and 724 to 733 (TGRVLEHWHS). A substrate-binding site is contributed by tryptophan 800. Residues asparagine 808 and lysine 825 each contribute to the Mo-bis(molybdopterin guanine dinucleotide) site.

It belongs to the prokaryotic molybdopterin-containing oxidoreductase family. NasA/NapA/NarB subfamily. As to quaternary structure, component of the periplasmic nitrate reductase NapAB complex composed of NapA and NapB. [4Fe-4S] cluster is required as a cofactor. The cofactor is Mo-bis(molybdopterin guanine dinucleotide). In terms of processing, predicted to be exported by the Tat system. The position of the signal peptide cleavage has not been experimentally proven.

Its subcellular location is the periplasm. The catalysed reaction is 2 Fe(II)-[cytochrome] + nitrate + 2 H(+) = 2 Fe(III)-[cytochrome] + nitrite + H2O. Its function is as follows. Catalytic subunit of the periplasmic nitrate reductase complex NapAB. Receives electrons from NapB and catalyzes the reduction of nitrate to nitrite. The polypeptide is Periplasmic nitrate reductase (Bradyrhizobium diazoefficiens (strain JCM 10833 / BCRC 13528 / IAM 13628 / NBRC 14792 / USDA 110)).